A 24-amino-acid chain; its full sequence is DYE-linked aldehyde dehydrogenase, alpha chain (24 aa).

As to quaternary structure, heterotetramer composed of an alpha, a beta and two gamma chains. It depends on Mo-molybdopterin cytosine dinucleotide as a cofactor.

Active with aldehydes and formate esters as substrates. This chain is DYE-linked aldehyde dehydrogenase, alpha chain, found in Amycolatopsis methanolica.